We begin with the raw amino-acid sequence, 47 residues long: Ruminococcin-A (47 aa).

An N-terminal signal peptide occupies residues Met1–Gly23. 2,3-didehydrobutyrine is present on residues Thr30 and Thr39. The segment at residues Thr30–Cys35 is a cross-link (beta-methyllanthionine (Thr-Cys)). The segment at residues Ser32–Cys46 is a cross-link (lanthionine (Ser-Cys)). Positions Thr45–Cys47 form a cross-link, beta-methyllanthionine (Thr-Cys).

Belongs to the type A lantibiotic family. Post-translationally, maturation of lantibiotics involves the enzymatic conversion of Thr, and Ser into dehydrated AA and the formation of thioether bonds with cysteine. This is followed by membrane translocation and cleavage of the modified precursor.

The protein localises to the secreted. In terms of biological role, lanthionine-containing peptide antibiotic (lantibiotic) active on Gram-positive bacteria. The bactericidal activity of lantibiotics is based on depolarization of energized bacterial cytoplasmic membranes, initiated by the formation of aqueous transmembrane pores. Ruminococcin A is a broad spectrum bacteriocin exhibiting activity against a wide range of pathogenic clostridia and B.longum. The polypeptide is Ruminococcin-A (rumA1) (Blautia hansenii (Ruminococcus hansenii)).